We begin with the raw amino-acid sequence, 428 residues long: Phosphoglucosamine mutase (428 aa).

Serine 96 functions as the Phosphoserine intermediate in the catalytic mechanism. Serine 96, aspartate 229, aspartate 231, and aspartate 233 together coordinate Mg(2+). Residue serine 96 is modified to Phosphoserine.

This sequence belongs to the phosphohexose mutase family. Mg(2+) is required as a cofactor. Post-translationally, activated by phosphorylation.

It carries out the reaction alpha-D-glucosamine 1-phosphate = D-glucosamine 6-phosphate. In terms of biological role, catalyzes the conversion of glucosamine-6-phosphate to glucosamine-1-phosphate. The sequence is that of Phosphoglucosamine mutase from Thermotoga neapolitana (strain ATCC 49049 / DSM 4359 / NBRC 107923 / NS-E).